We begin with the raw amino-acid sequence, 131 residues long: Arsenate reductase (131 aa).

Catalysis depends on nucleophile residues cysteine 10, cysteine 82, and cysteine 89. 2 disulfide bridges follow: cysteine 10–cysteine 82 and cysteine 82–cysteine 89.

It belongs to the low molecular weight phosphotyrosine protein phosphatase family. Thioredoxin-coupled ArsC subfamily.

It is found in the cytoplasm. It catalyses the reaction arsenate + [thioredoxin]-dithiol + H(+) = arsenite + [thioredoxin]-disulfide + H2O. Catalyzes the reduction of arsenate [As(V)] to arsenite [As(III)]. The protein is Arsenate reductase of Staphylococcus aureus (strain N315).